A 37-amino-acid polypeptide reads, in one-letter code: Large ribosomal subunit protein bL36 (37 aa).

Belongs to the bacterial ribosomal protein bL36 family.

The sequence is that of Large ribosomal subunit protein bL36 from Leptospira biflexa serovar Patoc (strain Patoc 1 / Ames).